A 244-amino-acid chain; its full sequence is MWFKKRIIIKETNILLKVDDKGYFKKAEEIILKNRLELERYILKNPYFLTSYFPVDVEDDAPEIVRLMAIAGEIANVGPMASVAGAIAEMLIKNLNAKNIIAENGGDICLRAKKDVIIGLYAGNSKITGEVGFRLKKEKIKNIYGVCTSSATVGHSVSFGEADAVTVFAKSSAIADAAATAICNASRGRDEEEMINNALEKADEIKKIDGIFVVVKDKVGIKGKIPELVKTDKRITLGELFDIY.

The protein belongs to the UPF0280 family.

This chain is UPF0280 protein MJ1526, found in Methanocaldococcus jannaschii (strain ATCC 43067 / DSM 2661 / JAL-1 / JCM 10045 / NBRC 100440) (Methanococcus jannaschii).